The following is a 332-amino-acid chain: Biotin synthase (332 aa).

The Radical SAM core domain maps to Tyr-47–Ala-273. [4Fe-4S] cluster-binding residues include Cys-65, Cys-69, and Cys-72. [2Fe-2S] cluster-binding residues include Cys-109, Cys-141, Cys-201, and Arg-271.

This sequence belongs to the radical SAM superfamily. Biotin synthase family. As to quaternary structure, homodimer. Requires [4Fe-4S] cluster as cofactor. [2Fe-2S] cluster is required as a cofactor.

The enzyme catalyses (4R,5S)-dethiobiotin + (sulfur carrier)-SH + 2 reduced [2Fe-2S]-[ferredoxin] + 2 S-adenosyl-L-methionine = (sulfur carrier)-H + biotin + 2 5'-deoxyadenosine + 2 L-methionine + 2 oxidized [2Fe-2S]-[ferredoxin]. It functions in the pathway cofactor biosynthesis; biotin biosynthesis; biotin from 7,8-diaminononanoate: step 2/2. Its function is as follows. Catalyzes the conversion of dethiobiotin (DTB) to biotin by the insertion of a sulfur atom into dethiobiotin via a radical-based mechanism. This Geobacillus thermodenitrificans (strain NG80-2) protein is Biotin synthase.